The chain runs to 477 residues: Probable cytosolic Fe-S cluster assembly factor GK14772 (477 aa).

The [4Fe-4S] cluster site is built by C23, C69, C72, C75, C188, C244, C396, and C400.

This sequence belongs to the NARF family.

Its function is as follows. Component of the cytosolic iron-sulfur (Fe/S) protein assembly machinery. Required for maturation of extramitochondrial Fe/S proteins. This chain is Probable cytosolic Fe-S cluster assembly factor GK14772, found in Drosophila willistoni (Fruit fly).